A 292-amino-acid polypeptide reads, in one-letter code: Aquaporin-3 (292 aa).

The Cytoplasmic segment spans residues 1–24; sequence MGRQKELVNRCGEMLHIRYRLLRQ. A helical membrane pass occupies residues 25–42; that stretch reads ALAECLGTLILVMFGCGS. Topologically, residues 43 to 56 are extracellular; that stretch reads VAQVVLSRGTHGGF. A helical membrane pass occupies residues 57-74; the sequence is LTINLAFGFAVTLGILIA. At 75–78 the chain is on the cytoplasmic side; the sequence is GQVS. Residues 79–92 constitute an intramembrane region (discontinuously helical); it reads GAHLNPAVTFAMCF. An NPA 1 motif is present at residues 83–85; the sequence is NPA. Over 93-100 the chain is Cytoplasmic; sequence LAREPWIK. Residues 101-121 form a helical membrane-spanning segment; the sequence is LPVYTLAQTLGAFLGAGIIFG. Residues 122 to 159 lie on the Extracellular side of the membrane; that stretch reads LYYDAIWAFANNQLIVSGPNGTAGIFATYPSGHLDMVN. An N-linked (GlcNAc...) asparagine glycan is attached at N141. A helical transmembrane segment spans residues 160-177; it reads GFFDQFIGTASLIVCVLA. Residues 178–189 are Cytoplasmic-facing; it reads IVDPYNNPVPRG. Residues 190-206 form a helical membrane-spanning segment; that stretch reads LEAFTVGLVVLVIGTSM. Over 207–210 the chain is Extracellular; that stretch reads GFNS. Positions 211–224 form an intramembrane region, discontinuously helical; sequence GYAVNPARDFGPRL. The short motif at 215 to 217 is the NPA 2 element; sequence NPA. The Extracellular portion of the chain corresponds to 225-242; that stretch reads FTAIAGWGSEVFTTGRHW. A helical transmembrane segment spans residues 243–264; sequence WWVPIVSPLLGSIAGVFVYQLM. The Cytoplasmic portion of the chain corresponds to 265–292; that stretch reads IGCHLEPPPPSTDEENVKLSHVKHKEQM.

Belongs to the MIP/aquaporin (TC 1.A.8) family. As to quaternary structure, homotetramer; each monomer provides an independent glycerol/water pore. Could also exist in other oligomeric states.

It is found in the cell membrane. The protein localises to the basolateral cell membrane. It carries out the reaction glycerol(in) = glycerol(out). The catalysed reaction is H2O(in) = H2O(out). The enzyme catalyses urea(in) = urea(out). It catalyses the reaction H2O2(out) = H2O2(in). In terms of biological role, aquaglyceroporins form homotetrameric transmembrane channels, with each monomer independently mediating glycerol and water transport across the plasma membrane along their osmotic gradient. Could also be permeable to urea. Also participates in cell permeability to H2O2 and H2O2-mediated signaling. In skin, transports glycerol to the epidermis and stratum corneum, where it maintains hydration, elasticity, and supports lipid biosynthesis for barrier repair. In kidney, contributes to the reabsorption of water, helping the body maintain proper fluid balance. This Bos taurus (Bovine) protein is Aquaporin-3.